The following is a 233-amino-acid chain: Adenosylcobinamide-GDP ribazoletransferase (233 aa).

7 consecutive transmembrane segments (helical) span residues 24–44 (LWAFPLVALVSSALPTLVLYL), 46–66 (LPLSNVLAVLALYFTIGLLHL), 96–116 (IAGLFAVVMVLFLQVYSLQLV), 117–137 (PFYAIFLAELNSKLAMLLALA), 156–176 (SGQLLGGFIFYAILLVPVVVY), 184–204 (LLGLAFGGYAIKVALDNFGGI), and 209–229 (IGAIAEITRAGTLLVVAFAGA).

It belongs to the CobS family. Mg(2+) is required as a cofactor.

Its subcellular location is the cell membrane. The catalysed reaction is alpha-ribazole + adenosylcob(III)inamide-GDP = adenosylcob(III)alamin + GMP + H(+). It catalyses the reaction alpha-ribazole 5'-phosphate + adenosylcob(III)inamide-GDP = adenosylcob(III)alamin 5'-phosphate + GMP + H(+). It functions in the pathway cofactor biosynthesis; adenosylcobalamin biosynthesis; adenosylcobalamin from cob(II)yrinate a,c-diamide: step 7/7. Joins adenosylcobinamide-GDP and alpha-ribazole to generate adenosylcobalamin (Ado-cobalamin). Also synthesizes adenosylcobalamin 5'-phosphate from adenosylcobinamide-GDP and alpha-ribazole 5'-phosphate. The sequence is that of Adenosylcobinamide-GDP ribazoletransferase from Thermococcus onnurineus (strain NA1).